A 512-amino-acid polypeptide reads, in one-letter code: PTS system mannitol-specific EIICB component (512 aa).

The Cytoplasmic segment spans residues 1–28 (MSQTEEKKGIGRRVQAFGSFLSSMIMPN). The region spanning 17-349 (FGSFLSSMIM…MKFTREPKQD (333 aa)) is the PTS EIIC type-2 domain. A helical transmembrane segment spans residues 29–50 (IGAFIAWGFIAAIFIDNGWLPN). Residues 51-54 (KDLA) are Extracellular-facing. A helical transmembrane segment spans residues 55 to 75 (TLAGPMITYLIPLLIAFSGGR). Over 76-139 (LIYDLRGGII…QGFEMLFNNF (64 aa)) the chain is Cytoplasmic. Residues 140 to 161 (SAGILGFIMTIAGFKILAPLMK) form a helical membrane-spanning segment. Residues 162 to 170 (FIMHILSVA) lie on the Extracellular side of the membrane. A helical transmembrane segment spans residues 171–191 (VEALVHAHLLPLVSILVEPAK). At 192–278 (IVFLNNAINH…VLMRPLLFIA (87 aa)) the chain is on the cytoplasmic side. A helical membrane pass occupies residues 279–298 (VILGGMTGVATYQATGFGFK). The Extracellular segment spans residues 299-318 (SPASPGSFIVYCLNAPRGEF). Residues 319-340 (LHMLLGVFLAALVSFVVAALIM) traverse the membrane as a helical segment. The Cytoplasmic segment spans residues 341 to 512 (KFTREPKQDL…LNNLKKDDQA (172 aa)). Positions 355–402 (AQMENTKGKKSSVASKLVSSDKNVNTEENASGNVSETSSSDDDPEALL) are disordered. Over residues 365 to 376 (SSVASKLVSSDK) the composition is skewed to low complexity. The span at 380 to 392 (TEENASGNVSETS) shows a compositional bias: polar residues. The 94-residue stretch at 419–512 (NHVIFACDAG…LNNLKKDDQA (94 aa)) folds into the PTS EIIB type-2 domain. The active-site Phosphocysteine intermediate; for EIIB activity is C425. At C425 the chain carries Phosphocysteine; by EIIA.

As to quaternary structure, homodimer.

It localises to the cell membrane. The catalysed reaction is D-mannitol(out) + N(pros)-phospho-L-histidyl-[protein] = D-mannitol 1-phosphate(in) + L-histidyl-[protein]. In terms of biological role, the phosphoenolpyruvate-dependent sugar phosphotransferase system (sugar PTS), a major carbohydrate active transport system, catalyzes the phosphorylation of incoming sugar substrates concomitantly with their translocation across the cell membrane. The enzyme II CmtAB PTS system is involved in D-mannitol transport. In Staphylococcus aureus (strain COL), this protein is PTS system mannitol-specific EIICB component (mtlA).